A 915-amino-acid polypeptide reads, in one-letter code: Protein translocase subunit SecA (915 aa).

Residues glutamine 87, 105 to 109 (GEGKT), and aspartate 512 contribute to the ATP site. The span at 849 to 864 (AAQQQARQAPLPNAPA) shows a compositional bias: low complexity. The tract at residues 849-915 (AAQQQARQAP…CHGSRAKDHA (67 aa)) is disordered. Residues 876-891 (PEEKVARVAAERHIGR) are compositionally biased toward basic and acidic residues. Zn(2+) contacts are provided by cysteine 895, cysteine 897, cysteine 906, and histidine 907.

The protein belongs to the SecA family. Monomer and homodimer. Part of the essential Sec protein translocation apparatus which comprises SecA, SecYEG and auxiliary proteins SecDF-YajC and YidC. It depends on Zn(2+) as a cofactor.

It localises to the cell inner membrane. Its subcellular location is the cytoplasm. The enzyme catalyses ATP + H2O + cellular proteinSide 1 = ADP + phosphate + cellular proteinSide 2.. Its function is as follows. Part of the Sec protein translocase complex. Interacts with the SecYEG preprotein conducting channel. Has a central role in coupling the hydrolysis of ATP to the transfer of proteins into and across the cell membrane, serving both as a receptor for the preprotein-SecB complex and as an ATP-driven molecular motor driving the stepwise translocation of polypeptide chains across the membrane. The sequence is that of Protein translocase subunit SecA from Actinobacillus succinogenes (strain ATCC 55618 / DSM 22257 / CCUG 43843 / 130Z).